The following is a 539-amino-acid chain: Chaperonin GroEL 1 (539 aa).

Residues 29–32, 86–90, Gly413, and Asp495 contribute to the ATP site; these read TLGP and DGTTT.

The protein belongs to the chaperonin (HSP60) family. In terms of assembly, forms a cylinder of 14 subunits composed of two heptameric rings stacked back-to-back. Interacts with the co-chaperonin GroES.

It localises to the cytoplasm. It carries out the reaction ATP + H2O + a folded polypeptide = ADP + phosphate + an unfolded polypeptide.. Functionally, together with its co-chaperonin GroES, plays an essential role in assisting protein folding. The GroEL-GroES system forms a nano-cage that allows encapsulation of the non-native substrate proteins and provides a physical environment optimized to promote and accelerate protein folding. This Mycobacterium bovis (strain ATCC BAA-935 / AF2122/97) protein is Chaperonin GroEL 1.